The following is a 142-amino-acid chain: Crustacean hyperglycemic hormones (142 aa).

Positions 1–26 (MYSKTIPAMLAIITVAYLCALPHAHA) are cleaved as a signal peptide. Residue Gln67 is modified to Pyrrolidone carboxylic acid; partial. Disulfide bonds link Cys73-Cys109, Cys89-Cys105, and Cys92-Cys118. Val138 carries the valine amide modification.

The protein belongs to the arthropod CHH/MIH/GIH/VIH hormone family. The N-terminus is blocked only in isoform CHH-II but not in isoform CHH-I. In terms of tissue distribution, produced by the medulla terminalis X-organ in the eyestalks and transported to the sinus gland where they are stored and released.

The protein resides in the secreted. Hormone found in the sinus gland of isopods and decapods which controls the blood sugar level. Has a secretagogue action over the amylase released from the midgut gland. May act as a stress hormone and may be involved in the control of molting and reproduction. This chain is Crustacean hyperglycemic hormones, found in Carcinus maenas (Common shore crab).